The primary structure comprises 81 residues: Putative membrane protein insertion efficiency factor (81 aa).

The segment at 60–81 (WNPGGYDPVPTHNTSNSSPMAE) is disordered. A compositionally biased stretch (polar residues) spans 70-81 (THNTSNSSPMAE).

Belongs to the UPF0161 family.

It localises to the cell inner membrane. In terms of biological role, could be involved in insertion of integral membrane proteins into the membrane. The sequence is that of Putative membrane protein insertion efficiency factor from Stutzerimonas stutzeri (strain A1501) (Pseudomonas stutzeri).